We begin with the raw amino-acid sequence, 271 residues long: 2-dehydro-3-deoxyphosphooctonate aldolase (271 aa).

The protein belongs to the KdsA family.

It is found in the cytoplasm. The enzyme catalyses D-arabinose 5-phosphate + phosphoenolpyruvate + H2O = 3-deoxy-alpha-D-manno-2-octulosonate-8-phosphate + phosphate. It participates in carbohydrate biosynthesis; 3-deoxy-D-manno-octulosonate biosynthesis; 3-deoxy-D-manno-octulosonate from D-ribulose 5-phosphate: step 2/3. Its pathway is bacterial outer membrane biogenesis; lipopolysaccharide biosynthesis. This is 2-dehydro-3-deoxyphosphooctonate aldolase from Campylobacter jejuni subsp. jejuni serotype O:23/36 (strain 81-176).